The chain runs to 363 residues: Protein U2 (363 aa).

The signal sequence occupies residues 1–18; the sequence is MFCRSPFLGISSWSLASA.

In Homo sapiens (Human), this protein is Protein U2 (U2).